A 389-amino-acid chain; its full sequence is Chalcone synthase 9 (389 aa).

Residue Cys164 is part of the active site.

The protein belongs to the thiolase-like superfamily. Chalcone/stilbene synthases family.

The enzyme catalyses (E)-4-coumaroyl-CoA + 3 malonyl-CoA + 3 H(+) = 2',4,4',6'-tetrahydroxychalcone + 3 CO2 + 4 CoA. It functions in the pathway secondary metabolite biosynthesis; flavonoid biosynthesis. Functionally, the primary product of this enzyme is 4,2',4',6'-tetrahydroxychalcone (also termed naringenin-chalcone or chalcone) which can under specific conditions spontaneously isomerize into naringenin. This is Chalcone synthase 9 (CHS9) from Daucus carota (Wild carrot).